Here is a 313-residue protein sequence, read N- to C-terminus: Pyrimidine-specific ribonucleoside hydrolase RihA (313 aa).

His-240 is a catalytic residue.

Belongs to the IUNH family. RihA subfamily.

Its function is as follows. Hydrolyzes cytidine or uridine to ribose and cytosine or uracil, respectively. The sequence is that of Pyrimidine-specific ribonucleoside hydrolase RihA from Enterobacter sp. (strain 638).